A 365-amino-acid polypeptide reads, in one-letter code: Mannonate dehydratase 1 (365 aa).

This sequence belongs to the mannonate dehydratase family. Requires Fe(2+) as cofactor. The cofactor is Mn(2+).

It carries out the reaction D-mannonate = 2-dehydro-3-deoxy-D-gluconate + H2O. Its pathway is carbohydrate metabolism; pentose and glucuronate interconversion. Catalyzes the dehydration of D-mannonate. This chain is Mannonate dehydratase 1, found in Bacillus licheniformis (strain ATCC 14580 / DSM 13 / JCM 2505 / CCUG 7422 / NBRC 12200 / NCIMB 9375 / NCTC 10341 / NRRL NRS-1264 / Gibson 46).